The chain runs to 178 residues: Inorganic pyrophosphatase (178 aa).

Substrate-binding residues include Lys-30, Arg-44, and Tyr-56. Mg(2+)-binding residues include Asp-66, Asp-71, and Asp-103. Tyr-142 contributes to the substrate binding site.

The protein belongs to the PPase family. Homohexamer. Requires Mg(2+) as cofactor.

The protein localises to the cytoplasm. The catalysed reaction is diphosphate + H2O = 2 phosphate + H(+). In terms of biological role, catalyzes the hydrolysis of inorganic pyrophosphate (PPi) forming two phosphate ions. The chain is Inorganic pyrophosphatase from Xanthomonas axonopodis pv. citri (strain 306).